Here is a 229-residue protein sequence, read N- to C-terminus: Protein-L-isoaspartate O-methyltransferase (229 aa).

The active site involves S78.

Belongs to the methyltransferase superfamily. L-isoaspartyl/D-aspartyl protein methyltransferase family.

The protein resides in the cytoplasm. It carries out the reaction [protein]-L-isoaspartate + S-adenosyl-L-methionine = [protein]-L-isoaspartate alpha-methyl ester + S-adenosyl-L-homocysteine. Functionally, catalyzes the methyl esterification of L-isoaspartyl residues in peptides and proteins that result from spontaneous decomposition of normal L-aspartyl and L-asparaginyl residues. It plays a role in the repair and/or degradation of damaged proteins. This is Protein-L-isoaspartate O-methyltransferase from Chromohalobacter salexigens (strain ATCC BAA-138 / DSM 3043 / CIP 106854 / NCIMB 13768 / 1H11).